We begin with the raw amino-acid sequence, 671 residues long: BLOC-3 complex member HPS4 (671 aa).

Residues 269 to 286 (LQGSSVQYPPWDQSSPTQ) are compositionally biased toward polar residues. 2 disordered regions span residues 269–291 (LQGS…EDAW) and 417–497 (LADL…PSGR). Residues 467 to 477 (SALPRSSRSPD) are compositionally biased toward low complexity.

In terms of assembly, component of the biogenesis of lysosome-related organelles complex-3 (or BLOC-3), a heterodimer of HPS1 and HPS4. HPS4 and the BLOC-3 complex interact with the GTP-bound form of RAB9B but not with the GDP-bound form of RAB9B. HPS4 and the BLOC-3 complex interact with the GTP-bound form of RAB9A but not with the GDP-bound form of RAB9A. HPS4 does not interact RAB4A and RAB7A. Highly expressed in heart, brain, liver and testis. Expressed at lower level in skeletal muscle.

In terms of biological role, component of the BLOC-3 complex, a complex that acts as a guanine exchange factor (GEF) for RAB32 and RAB38, promotes the exchange of GDP to GTP, converting them from an inactive GDP-bound form into an active GTP-bound form. The BLOC-3 complex plays an important role in the control of melanin production and melanosome biogenesis and promotes the membrane localization of RAB32 and RAB38. In Mus musculus (Mouse), this protein is BLOC-3 complex member HPS4 (Hps4).